A 121-amino-acid chain; its full sequence is uncharacterized protein (121 aa).

Residues 101 to 121 are disordered; that stretch reads SIEPTATGSPETRDPDPSAYA. Residues 111–121 are compositionally biased toward basic and acidic residues; that stretch reads ETRDPDPSAYA.

It is found in the mitochondrion. This is an uncharacterized protein from Arabidopsis thaliana (Mouse-ear cress).